A 299-amino-acid chain; its full sequence is UDP-N-acetylenolpyruvoylglucosamine reductase (299 aa).

The FAD-binding PCMH-type domain maps to 19–192 (LGGQALAEVR…AAVTLQLRRS (174 aa)). R169 is a catalytic residue. C221 serves as the catalytic Proton donor. E292 is an active-site residue.

Belongs to the MurB family. FAD serves as cofactor.

It is found in the cytoplasm. It catalyses the reaction UDP-N-acetyl-alpha-D-muramate + NADP(+) = UDP-N-acetyl-3-O-(1-carboxyvinyl)-alpha-D-glucosamine + NADPH + H(+). The protein operates within cell wall biogenesis; peptidoglycan biosynthesis. Functionally, cell wall formation. In Oleidesulfovibrio alaskensis (strain ATCC BAA-1058 / DSM 17464 / G20) (Desulfovibrio alaskensis), this protein is UDP-N-acetylenolpyruvoylglucosamine reductase.